The chain runs to 670 residues: Probable beta-glucosidase N (670 aa).

The first 21 residues, 1–21, serve as a signal peptide directing secretion; the sequence is MHSNILPVLTSVATLLGLVQG. A glycan (N-linked (GlcNAc...) asparagine) is linked at Asn-51. Positions 65–87 are disordered; the sequence is FEPSDGVRSVQGSGKDYDNPAMR. An N-linked (GlcNAc...) asparagine glycan is attached at Asn-141. Residue Asp-152 is part of the active site. Asn-184, Asn-248, Asn-330, and Asn-417 each carry an N-linked (GlcNAc...) asparagine glycan.

The protein belongs to the glycosyl hydrolase 3 family.

The protein localises to the secreted. It catalyses the reaction Hydrolysis of terminal, non-reducing beta-D-glucosyl residues with release of beta-D-glucose.. Its pathway is glycan metabolism; cellulose degradation. In terms of biological role, beta-glucosidases are one of a number of cellulolytic enzymes involved in the degradation of cellulosic biomass. Catalyzes the last step releasing glucose from the inhibitory cellobiose. The polypeptide is Probable beta-glucosidase N (bglN) (Emericella nidulans (strain FGSC A4 / ATCC 38163 / CBS 112.46 / NRRL 194 / M139) (Aspergillus nidulans)).